The following is a 469-amino-acid chain: Equisetin cluster transcription factor eqxR (469 aa).

Residues 13 to 47 (CDRCRSHKLKCTVAPENSRSGSNRCTRCIRAQVTC) constitute a DNA-binding region (zn(2)-C6 fungal-type). The tract at residues 58 to 84 (STNVKKADIKSGTNSQETTSMQASTIV) is disordered. Over residues 68–82 (SGTNSQETTSMQAST) the composition is skewed to polar residues.

The protein resides in the nucleus. In terms of biological role, transcription factor that regulates the expression of the gene cluster that mediates the biosynthesis of Equisetin. The polypeptide is Equisetin cluster transcription factor eqxR (Fusarium heterosporum).